Reading from the N-terminus, the 198-residue chain is Protein GrpE (198 aa).

Residues 1–18 (MSEQEQKVEIPEVEKQEE) are compositionally biased toward basic and acidic residues. The segment at 1-33 (MSEQEQKVEIPEVEKQEEVVVEETQQAEHSQEF) is disordered.

Belongs to the GrpE family. Homodimer.

It localises to the cytoplasm. Functionally, participates actively in the response to hyperosmotic and heat shock by preventing the aggregation of stress-denatured proteins, in association with DnaK and GrpE. It is the nucleotide exchange factor for DnaK and may function as a thermosensor. Unfolded proteins bind initially to DnaJ; upon interaction with the DnaJ-bound protein, DnaK hydrolyzes its bound ATP, resulting in the formation of a stable complex. GrpE releases ADP from DnaK; ATP binding to DnaK triggers the release of the substrate protein, thus completing the reaction cycle. Several rounds of ATP-dependent interactions between DnaJ, DnaK and GrpE are required for fully efficient folding. The protein is Protein GrpE of Haemophilus influenzae (strain ATCC 51907 / DSM 11121 / KW20 / Rd).